The following is a 234-amino-acid chain: Glycerol uptake facilitator protein (234 aa).

6 helical membrane passes run 9–29 (FLGT…VVLP), 37–57 (GWIV…FVSG), 61–81 (PAHL…LPWA), 83–103 (VLPY…LVWL), 135–155 (LISE…LGLY), and 159–179 (AGIG…SLGG). Residues 65–67 (NPA) carry the NPA 1 motif. Positions 186–188 (NPA) match the NPA 2 motif. A helical transmembrane segment spans residues 214-234 (WIPVVGPVIGAALAVLVFSLF).

The protein belongs to the MIP/aquaporin (TC 1.A.8) family.

The protein resides in the cell membrane. It carries out the reaction glycerol(in) = glycerol(out). In terms of biological role, mediates glycerol diffusion across the cytoplasmic membrane via a pore-type mechanism. The protein is Glycerol uptake facilitator protein (glpF) of Streptococcus pneumoniae (strain ATCC BAA-255 / R6).